The following is a 168-amino-acid chain: MFIIAESNQLYLGDMLFYLVSFLIMAALVWHFAWKPVTQMMQKRADKIANDIDSAAQSREEAQKLAAKRQEELKGSRQEAARIVDNAKQAGESQRAEIIATAQQDAQNLKNQAQKDAEQARQDALRGAKKDIANLSIEIASKLIHKQLNADDQQALIDTYIEGLVKHE.

Residues 10–30 (LYLGDMLFYLVSFLIMAALVW) traverse the membrane as a helical segment. Positions 61 to 80 (EAQKLAAKRQEELKGSRQEA) are disordered.

This sequence belongs to the ATPase B chain family. F-type ATPases have 2 components, F(1) - the catalytic core - and F(0) - the membrane proton channel. F(1) has five subunits: alpha(3), beta(3), gamma(1), delta(1), epsilon(1). F(0) has three main subunits: a(1), b(2) and c(10-14). The alpha and beta chains form an alternating ring which encloses part of the gamma chain. F(1) is attached to F(0) by a central stalk formed by the gamma and epsilon chains, while a peripheral stalk is formed by the delta and b chains.

It localises to the cell membrane. F(1)F(0) ATP synthase produces ATP from ADP in the presence of a proton or sodium gradient. F-type ATPases consist of two structural domains, F(1) containing the extramembraneous catalytic core and F(0) containing the membrane proton channel, linked together by a central stalk and a peripheral stalk. During catalysis, ATP synthesis in the catalytic domain of F(1) is coupled via a rotary mechanism of the central stalk subunits to proton translocation. In terms of biological role, component of the F(0) channel, it forms part of the peripheral stalk, linking F(1) to F(0). This Limosilactobacillus fermentum (strain NBRC 3956 / LMG 18251) (Lactobacillus fermentum) protein is ATP synthase subunit b.